Consider the following 317-residue polypeptide: UV DNA damage endonuclease (317 aa).

The protein belongs to the uve1/UvsE family.

Component in a DNA repair pathway. Removal of UV LIGHT damaged nucleotides. Recognizes pyrimidine dimers and cleave a phosphodiester bond immediately 5' to the lesion. This is UV DNA damage endonuclease from Bacillus cereus (strain B4264).